The primary structure comprises 264 residues: 3'-5' ssDNA/RNA exonuclease TatD (264 aa).

3 residues coordinate a divalent metal cation: glutamate 92, histidine 128, and histidine 153.

This sequence belongs to the metallo-dependent hydrolases superfamily. TatD-type hydrolase family. TatD subfamily. In terms of assembly, monomer. It depends on Mg(2+) as a cofactor.

It is found in the cytoplasm. Functionally, 3'-5' exonuclease that prefers single-stranded DNA and RNA. May play a role in the H(2)O(2)-induced DNA damage repair. This is 3'-5' ssDNA/RNA exonuclease TatD from Dickeya dadantii (strain 3937) (Erwinia chrysanthemi (strain 3937)).